The sequence spans 328 residues: Malate dehydrogenase (328 aa).

12–18 (GAAGQIG) contacts NAD(+). Residues R95 and R101 each contribute to the substrate site. Residues N108, Q115, and 132–134 (VGN) each bind NAD(+). Positions 134 and 165 each coordinate substrate. Residue H190 is the Proton acceptor of the active site.

This sequence belongs to the LDH/MDH superfamily. MDH type 2 family.

It catalyses the reaction (S)-malate + NAD(+) = oxaloacetate + NADH + H(+). Functionally, catalyzes the reversible oxidation of malate to oxaloacetate. The protein is Malate dehydrogenase of Polaromonas naphthalenivorans (strain CJ2).